Reading from the N-terminus, the 148-residue chain is Suppressor APC domain-containing protein 1 (148 aa).

Positions 120 to 148 (SRQQKGVTQPKEEMAQRGCTKGPRGPTRV) are disordered.

The protein is Suppressor APC domain-containing protein 1 (SAPCD1) of Homo sapiens (Human).